The chain runs to 377 residues: Flagellin D (377 aa).

A coiled-coil region spans residues 104-128 (NSKADRVAIQEEVTALNDELNRIAE).

This sequence belongs to the bacterial flagellin family. Heteromer of multiple flagellin subunits including FlaA, FlaB, FlaC, FlaD and possibly FlaE.

Its subcellular location is the secreted. It is found in the bacterial flagellum. Flagellin is the subunit protein which polymerizes to form the filaments of bacterial flagella. FlaD is not essential for flagellar synthesis and motility. May have a role in virulence unrelated to motility. The chain is Flagellin D (flaD) from Vibrio anguillarum (Listonella anguillarum).